A 367-amino-acid polypeptide reads, in one-letter code: D-alanine--D-alanine ligase (367 aa).

An ATP-grasp domain is found at 139–340 (KLILKEKNIP…FSQVIDNMIS (202 aa)). 169 to 224 (KEVLEYPMIVKPARLGSSIGVKKVNDKCELEEAIETAFSFDDKVIVEKWIDSRELN) provides a ligand contact to ATP. Residues aspartate 298, glutamate 311, and asparagine 313 each contribute to the Mg(2+) site.

It belongs to the D-alanine--D-alanine ligase family. It depends on Mg(2+) as a cofactor. Mn(2+) serves as cofactor.

The protein localises to the cytoplasm. It carries out the reaction 2 D-alanine + ATP = D-alanyl-D-alanine + ADP + phosphate + H(+). It participates in cell wall biogenesis; peptidoglycan biosynthesis. Cell wall formation. The protein is D-alanine--D-alanine ligase of Thermosipho africanus (strain TCF52B).